We begin with the raw amino-acid sequence, 392 residues long: Pannexin-3 (392 aa).

The Cytoplasmic segment spans residues 1 to 39 (MSLAHTAAEYMLSDALLPDRRGSRLKGLRLELPLDKMVK). The chain crosses the membrane as a helical span at residues 40 to 60 (FVTVGFPLLLMSLAFAQEFSS). The Extracellular portion of the chain corresponds to 61–113 (GSPISCFSPSNFSVRQAVFVDSSCWDSLAHYKQDEAGQYTVKSLWPHKALPYS). N-linked (GlcNAc...) asparagine glycosylation occurs at Asn-71. A helical transmembrane segment spans residues 114–134 (LLALAVAMYLPVLLWQYAAVP). Topologically, residues 135–215 (ALSSDLLFII…VATYLLRNAL (81 aa)) are cytoplasmic. The chain crosses the membrane as a helical span at residues 216-236 (LLLFTSATYLYLGHFHLDVFF). The Extracellular portion of the chain corresponds to 237 to 267 (QEEFSCSIKTGLLHEETHVPELITCRLTSLS). The helical transmembrane segment at 268–288 (VFQIVSVSSVAIYTVLVPVII) threads the bilayer. Over 289–392 (YNLTRLCRWD…LTQHTYDEHP (104 aa)) the chain is Cytoplasmic.

It belongs to the pannexin family. As to quaternary structure, homoheptameric. In terms of tissue distribution, skin.

It localises to the cell membrane. The protein localises to the cell junction. The protein resides in the gap junction. It is found in the endoplasmic reticulum membrane. The enzyme catalyses Ca(2+)(in) = Ca(2+)(out). It catalyses the reaction ATP(in) = ATP(out). Its function is as follows. Regulator of osteoblast differentiation by functionning as a Ca(2+) channel in the endoplasmic reticulum which regulates calmodulin (CaM) pathways. Allows ATP release into the extracellular space and activation or purinergic receptors. In Rattus norvegicus (Rat), this protein is Pannexin-3 (Panx3).